Here is a 558-residue protein sequence, read N- to C-terminus: Tektin-5 (558 aa).

Positions isoleucine 347–alanine 381 form a coiled coil.

It belongs to the tektin family. Microtubule inner protein component of sperm flagellar doublet microtubules. Interacts with TEKT3. In terms of processing, ubiquitinated, leading to its degradation. Deubiquitinated by USP16, promoting its stability. In terms of tissue distribution, specifically expressed in testis.

The protein localises to the cytoplasm. It is found in the cytoskeleton. It localises to the flagellum axoneme. Functionally, sperm-specific microtubule inner protein (MIP) part of the dynein-decorated doublet microtubules (DMTs) in flagellar axoneme. Forms an extensive interaction network in different conformations that reinforces the helix bundle composed by other tektin proteins (TEKT1 to TEKT4) and MIPs to anchor the tektin bundle onto the tubulin wall of A-tubule of the sperm flagellum. This chain is Tektin-5, found in Rattus norvegicus (Rat).